Consider the following 446-residue polypeptide: Maltoporin (446 aa).

Residues 1–25 (MMITLRKLPLAVAVAAGVMSAQAMA) form the signal peptide.

Belongs to the porin LamB (TC 1.B.3) family. Homotrimer formed of three 18-stranded antiparallel beta-barrels, containing three independent channels.

The protein resides in the cell outer membrane. It carries out the reaction beta-maltose(in) = beta-maltose(out). In terms of biological role, involved in the transport of maltose and maltodextrins. This chain is Maltoporin, found in Escherichia coli (strain K12 / MC4100 / BW2952).